We begin with the raw amino-acid sequence, 88 residues long: MARVTVEDCLDNVDNRFELVMLATKRARQLATGGKEPKVAWENDKPTVVALREIASGLVDENVVQQEDIVEDEPLFAAFDDEANTEAL.

The protein belongs to the RNA polymerase subunit omega family. The RNAP catalytic core consists of 2 alpha, 1 beta, 1 beta' and 1 omega subunit. When a sigma factor is associated with the core the holoenzyme is formed, which can initiate transcription.

It carries out the reaction RNA(n) + a ribonucleoside 5'-triphosphate = RNA(n+1) + diphosphate. Its function is as follows. Promotes RNA polymerase assembly. Latches the N- and C-terminal regions of the beta' subunit thereby facilitating its interaction with the beta and alpha subunits. This Pseudomonas aeruginosa (strain LESB58) protein is DNA-directed RNA polymerase subunit omega.